Reading from the N-terminus, the 446-residue chain is MSSSINILSTKLGQNIYAQTPPSQTLTLTNHLLQKNHDTLHIFFRNLNGHNHLVHNLLTRLVLGATPEQLQTAYDDDLPTQRAMPPLVPSIVERLSDNSYFESQITQIDQYTNFLRFFEAEIDRRDSWKDVVIEYVFSRSPIAEKILPLMYDGAFHSIIHLGLGVEFEQPGIIAEALAQAAAHDSFGTDYFFLTAEKRAAGRNEEGETLVNLLQKIRDTPKLVEAGRVQGLIGTMKMRKSILVNAADEIIDIASRFKVTEETLARKTAEMLNLCAYLAGASQRTKDGYEPKIDFFFMHCVTSSIFFSILGRQDWISMRDRVRLVEWKGRLDLMWYALCGVPELDFEFVRTYRGERTGTMSWKELFAIVNEQHDDGHVAKFVRALKNGQEVCGQFEDGEEFMVKGDMWLRIARMAYETTIETNMQNRWVVMAGMDGAWKDFKVQSSD.

It belongs to the AflY oxidoreductase family. It depends on NADPH as a cofactor.

Its pathway is secondary metabolite biosynthesis. Baeyer-Villiger oxidase; part of the gene cluster that mediates the biosynthesis of monodictyphenone, a prenyl xanthone derivative. The pathway begins with the synthesis of atrochrysone thioester by the polyketide synthase (PKS) mdpG. The atrochrysone carboxyl ACP thioesterase mdpF then breaks the thioester bond and releases the atrochrysone carboxylic acid from mdpG. The atrochrysone carboxylic acid is then converted to atrochrysone which is further transformed into emodin anthrone. The next step is performed by the anthrone oxygenase mdpH that catalyzes the oxidation of emodinanthrone to emodin. Emodin is further modified to yield monodictyphenone via several steps involving mdpB, mdpC mdpJ, mdpK and mdpL. These enzymes with xptA, xptB and xptC are also proposed to be involved in the synthesis of shamixanthone from emodin. Especially, direct reduction of emodin by the short chain dehydrogenase mdpC followed by dehydration catalyzed by the scytalone dehydratase-like protein mdpB gives loss of oxygen and formation of chrysophanol intermediate in two simple steps. This Emericella nidulans (strain FGSC A4 / ATCC 38163 / CBS 112.46 / NRRL 194 / M139) (Aspergillus nidulans) protein is Baeyer-Villiger oxidase mdpL.